A 595-amino-acid chain; its full sequence is Aspartate--tRNA(Asp/Asn) ligase (595 aa).

Glu175 is a binding site for L-aspartate. Positions 199–202 (QQYK) are aspartate. Arg221 and His454 together coordinate L-aspartate. 221–223 (RDE) is an ATP binding site. ATP is bound at residue Glu488. Residue Arg495 participates in L-aspartate binding. 540-543 (GIDR) serves as a coordination point for ATP.

This sequence belongs to the class-II aminoacyl-tRNA synthetase family. Type 1 subfamily. Homodimer.

The protein localises to the cytoplasm. It catalyses the reaction tRNA(Asx) + L-aspartate + ATP = L-aspartyl-tRNA(Asx) + AMP + diphosphate. Functionally, aspartyl-tRNA synthetase with relaxed tRNA specificity since it is able to aspartylate not only its cognate tRNA(Asp) but also tRNA(Asn). Reaction proceeds in two steps: L-aspartate is first activated by ATP to form Asp-AMP and then transferred to the acceptor end of tRNA(Asp/Asn). This Rhizobium meliloti (strain 1021) (Ensifer meliloti) protein is Aspartate--tRNA(Asp/Asn) ligase.